The primary structure comprises 285 residues: Ribosomal RNA small subunit methyltransferase A (285 aa).

The S-adenosyl-L-methionine site is built by H27, L29, G54, E75, D100, and N120.

Belongs to the class I-like SAM-binding methyltransferase superfamily. rRNA adenine N(6)-methyltransferase family. RsmA subfamily.

It is found in the cytoplasm. It carries out the reaction adenosine(1518)/adenosine(1519) in 16S rRNA + 4 S-adenosyl-L-methionine = N(6)-dimethyladenosine(1518)/N(6)-dimethyladenosine(1519) in 16S rRNA + 4 S-adenosyl-L-homocysteine + 4 H(+). Specifically dimethylates two adjacent adenosines (A1518 and A1519) in the loop of a conserved hairpin near the 3'-end of 16S rRNA in the 30S particle. May play a critical role in biogenesis of 30S subunits. The chain is Ribosomal RNA small subunit methyltransferase A from Phenylobacterium zucineum (strain HLK1).